The chain runs to 95 residues: Aspartyl/glutamyl-tRNA(Asn/Gln) amidotransferase subunit C (95 aa).

The protein belongs to the GatC family. In terms of assembly, heterotrimer of A, B and C subunits.

The catalysed reaction is L-glutamyl-tRNA(Gln) + L-glutamine + ATP + H2O = L-glutaminyl-tRNA(Gln) + L-glutamate + ADP + phosphate + H(+). It catalyses the reaction L-aspartyl-tRNA(Asn) + L-glutamine + ATP + H2O = L-asparaginyl-tRNA(Asn) + L-glutamate + ADP + phosphate + 2 H(+). Allows the formation of correctly charged Asn-tRNA(Asn) or Gln-tRNA(Gln) through the transamidation of misacylated Asp-tRNA(Asn) or Glu-tRNA(Gln) in organisms which lack either or both of asparaginyl-tRNA or glutaminyl-tRNA synthetases. The reaction takes place in the presence of glutamine and ATP through an activated phospho-Asp-tRNA(Asn) or phospho-Glu-tRNA(Gln). The chain is Aspartyl/glutamyl-tRNA(Asn/Gln) amidotransferase subunit C from Rhizobium etli (strain CIAT 652).